Reading from the N-terminus, the 133-residue chain is Holo-[acyl-carrier-protein] synthase (133 aa).

2 residues coordinate Mg(2+): D8 and E57.

This sequence belongs to the P-Pant transferase superfamily. AcpS family. Mg(2+) serves as cofactor.

The protein localises to the cytoplasm. It carries out the reaction apo-[ACP] + CoA = holo-[ACP] + adenosine 3',5'-bisphosphate + H(+). Functionally, transfers the 4'-phosphopantetheine moiety from coenzyme A to a Ser of acyl-carrier-protein. The protein is Holo-[acyl-carrier-protein] synthase of Bartonella henselae (strain ATCC 49882 / DSM 28221 / CCUG 30454 / Houston 1) (Rochalimaea henselae).